The following is a 117-amino-acid chain: Fluoride-specific ion channel FluC 2 (117 aa).

Transmembrane regions (helical) follow at residues methionine 1 to isoleucine 21 and phenylalanine 46 to valine 66. Na(+) is bound by residues glycine 71 and threonine 74. A helical transmembrane segment spans residues leucine 95–tyrosine 115.

The protein belongs to the fluoride channel Fluc/FEX (TC 1.A.43) family.

It localises to the cell membrane. It catalyses the reaction fluoride(in) = fluoride(out). Na(+) is not transported, but it plays an essential structural role and its presence is essential for fluoride channel function. Fluoride-specific ion channel. Important for reducing fluoride concentration in the cell, thus reducing its toxicity. This Staphylococcus aureus (strain MRSA252) protein is Fluoride-specific ion channel FluC 2.